Consider the following 266-residue polypeptide: Putative carbamate hydrolase RutD (266 aa).

The protein belongs to the AB hydrolase superfamily. Hydrolase RutD family.

It catalyses the reaction carbamate + 2 H(+) = NH4(+) + CO2. In terms of biological role, involved in pyrimidine catabolism. May facilitate the hydrolysis of carbamate, a reaction that can also occur spontaneously. The polypeptide is Putative carbamate hydrolase RutD (Escherichia coli O111:H- (strain 11128 / EHEC)).